A 134-amino-acid polypeptide reads, in one-letter code: S-protein homolog 31 (134 aa).

A signal peptide spans 1–21; that stretch reads MKILSVFLFVFSIYIFGHVSG. An N-linked (GlcNAc...) asparagine glycan is attached at Asn87.

The protein belongs to the plant self-incompatibility (S1) protein family.

The protein localises to the secreted. This chain is S-protein homolog 31, found in Arabidopsis thaliana (Mouse-ear cress).